Reading from the N-terminus, the 195-residue chain is Peptidyl-tRNA hydrolase (195 aa).

Tyrosine 17 serves as a coordination point for tRNA. Histidine 22 (proton acceptor) is an active-site residue. TRNA-binding residues include phenylalanine 68, asparagine 70, and asparagine 116.

It belongs to the PTH family. In terms of assembly, monomer.

Its subcellular location is the cytoplasm. It carries out the reaction an N-acyl-L-alpha-aminoacyl-tRNA + H2O = an N-acyl-L-amino acid + a tRNA + H(+). Functionally, hydrolyzes ribosome-free peptidyl-tRNAs (with 1 or more amino acids incorporated), which drop off the ribosome during protein synthesis, or as a result of ribosome stalling. Catalyzes the release of premature peptidyl moieties from peptidyl-tRNA molecules trapped in stalled 50S ribosomal subunits, and thus maintains levels of free tRNAs and 50S ribosomes. This Pectobacterium atrosepticum (strain SCRI 1043 / ATCC BAA-672) (Erwinia carotovora subsp. atroseptica) protein is Peptidyl-tRNA hydrolase.